The chain runs to 550 residues: Hydroxylamine reductase (550 aa).

The [2Fe-2S] cluster site is built by C3, C6, C18, and C25. Residues H249, E273, C317, C405, C433, C458, E492, and K494 each coordinate hybrid [4Fe-2O-2S] cluster. Position 405 is a cysteine persulfide (C405).

It belongs to the HCP family. Requires [2Fe-2S] cluster as cofactor. The cofactor is hybrid [4Fe-2O-2S] cluster.

The protein localises to the cytoplasm. The catalysed reaction is A + NH4(+) + H2O = hydroxylamine + AH2 + H(+). Its function is as follows. Catalyzes the reduction of hydroxylamine to form NH(3) and H(2)O. This chain is Hydroxylamine reductase, found in Pectobacterium atrosepticum (strain SCRI 1043 / ATCC BAA-672) (Erwinia carotovora subsp. atroseptica).